Consider the following 268-residue polypeptide: Nuclear protein UL4 homolog (268 aa).

It belongs to the alphaherpesvirinae HHV-1 UL4 family.

The protein localises to the host nucleus. The sequence is that of Nuclear protein UL4 homolog (MDV016) from Gallid herpesvirus 2 (strain Chicken/Md5/ATCC VR-987) (GaHV-2).